Consider the following 279-residue polypeptide: MSEPNAIVKVGNIIFSNEAPFSLIAGPCQIESRDHAFEMAGRIKTITDQVGIGFVYKSSYDKANRTSLSAVRGVGLENAMAIFSDLKKEFGCPILTDVHTEEQCTVVASTVDILQIPAFLCRQTDLLVAAAKTGRVINIKKGQFLAPWDMKNVLRKVTQSGNRNVMLCERGTSFGYNRLISDMRSLPILRSFGAPVIFDATHSVQEPGGQGDSSGGQRQFVEILARAAVSVGVAGIFLETHQDPDNAPSDGPNMIKIDHLQRLLETLMEFDYLSKKTIE.

This sequence belongs to the KdsA family.

The protein localises to the cytoplasm. The catalysed reaction is D-arabinose 5-phosphate + phosphoenolpyruvate + H2O = 3-deoxy-alpha-D-manno-2-octulosonate-8-phosphate + phosphate. Its pathway is carbohydrate biosynthesis; 3-deoxy-D-manno-octulosonate biosynthesis; 3-deoxy-D-manno-octulosonate from D-ribulose 5-phosphate: step 2/3. It participates in bacterial outer membrane biogenesis; lipopolysaccharide biosynthesis. The chain is 2-dehydro-3-deoxyphosphooctonate aldolase from Bartonella henselae (strain ATCC 49882 / DSM 28221 / CCUG 30454 / Houston 1) (Rochalimaea henselae).